Reading from the N-terminus, the 387-residue chain is Mitochondrial import inner membrane translocase subunit TIM50 (387 aa).

A mitochondrion-targeting transit peptide spans 1–26; that stretch reads MSAVSVYPMCVRASRGLLRLRQGARC. Over 27-100 the chain is Mitochondrial matrix; sequence STAPPLLDVV…QKENTAYAKK (74 aa). The disordered stretch occupies residues 61-93; it reads LQQQQKSQEQPPPEGEDSGHKQDEQGEDKKQKE. Residues 77–93 show a composition bias toward basic and acidic residues; sequence DSGHKQDEQGEDKKQKE. Residues 101–121 form a helical membrane-spanning segment; it reads MVLRLAGIMGLGGTVGIVYIF. Residues 122–387 lie on the Mitochondrial intermembrane side of the membrane; that stretch reads GSNSVDEQGN…AGRFWSRKQQ (266 aa). The FCP1 homology domain maps to 178–321; sequence YYQPPYTLVL…YDLAAFLKTI (144 aa).

It belongs to the TIM50 family. Component of the TIM23 complex at least composed of timm23, timm17 and timm50.

It localises to the mitochondrion inner membrane. In terms of biological role, essential component of the TIM23 complex, a complex that mediates the translocation of transit peptide-containing proteins across the mitochondrial inner membrane. The chain is Mitochondrial import inner membrane translocase subunit TIM50 (timm50) from Danio rerio (Zebrafish).